The chain runs to 308 residues: Olfactory receptor 2T6 (308 aa).

The Extracellular portion of the chain corresponds to 1 to 28 (MNENNETLTRGFTLMGLFTHNKCSGFFF). Asparagine 5 is a glycosylation site (N-linked (GlcNAc...) asparagine). Residues 29-49 (GVICAVFFMAMIANGVMIFLI) traverse the membrane as a helical segment. At 50-57 (NIDPHLHT) the chain is on the cytoplasmic side. The chain crosses the membrane as a helical span at residues 58 to 78 (PMYFLLSHLSVIDTLYISTIV). Residues 79–98 (PKMLVDYLMGEGTISFIACT) lie on the Extracellular side of the membrane. Cysteine 97 and cysteine 179 form a disulfide bridge. A helical transmembrane segment spans residues 99-119 (AQCFLYMGFMGAEFFLLGLMA). At 120–145 (YDRYVAICNPLRYPVLISWRVCWMIL) the chain is on the cytoplasmic side. Residues 146 to 166 (ASSWFGGALDSFLLTPITMSL) traverse the membrane as a helical segment. Topologically, residues 167-203 (PFCASHQINHFFCEAPTMLRLACGDKTTYETVMYVCC) are extracellular. Residues 204–224 (VAMLLIPFSVVTASYTRILIT) form a helical membrane-spanning segment. The Cytoplasmic portion of the chain corresponds to 225 to 236 (VHQMTSAEGRKK). The helical transmembrane segment at 237–257 (AFATCSSHMMVVTLFYGAALY) threads the bilayer. Topologically, residues 258–271 (TYTLPQSYHTPIKD) are extracellular. A helical membrane pass occupies residues 272 to 292 (KVFSAFYTILTPLLNPLIYSL). Residues 293 to 308 (RNRDVMGALKRVVARC) are Cytoplasmic-facing.

This sequence belongs to the G-protein coupled receptor 1 family.

It is found in the cell membrane. Functionally, odorant receptor. The polypeptide is Olfactory receptor 2T6 (OR2T6) (Homo sapiens (Human)).